A 487-amino-acid polypeptide reads, in one-letter code: Benzaldehyde dehydrogenase [NAD(+)] (487 aa).

An NAD(+)-binding site is contributed by 232 to 237 (GSTQVG). Catalysis depends on residues E254 and C288.

It belongs to the aldehyde dehydrogenase family. Homotetramer.

It catalyses the reaction benzaldehyde + NAD(+) + H2O = benzoate + NADH + 2 H(+). The protein is Benzaldehyde dehydrogenase [NAD(+)] (xylC) of Pseudomonas putida (Arthrobacter siderocapsulatus).